Reading from the N-terminus, the 278-residue chain is Trehalose monomycolate transport factor A (278 aa).

A topological domain (periplasmic) is located at residue Met-1. A helical transmembrane segment spans residues 2–22; the sequence is VPLWFTLSALCFVGAAVLLYV. Topologically, residues 23 to 278 are cytoplasmic; sequence DIDRRRGLGR…NGREASHFQR (256 aa). Residues 200–278 are disordered; that stretch reads PPVPQNGSQA…NGREASHFQR (79 aa). The span at 269 to 278 shows a compositional bias: basic and acidic residues; it reads NGREASHFQR.

As to quaternary structure, monomer. Interacts (via N-terminus) with MmpL3; active trehalose monomycolate (TMM) biosynthesis is not required for the complex formation. Interacts with MSMEG_5308.

It localises to the cell inner membrane. Its subcellular location is the cell septum. The protein localises to the cell tip. In terms of biological role, required for MmpL3-dependent trehalose monomycolate (TMM) transport to the cell wall. Required for growth and cell elongation. This Mycolicibacterium smegmatis (strain ATCC 700084 / mc(2)155) (Mycobacterium smegmatis) protein is Trehalose monomycolate transport factor A.